Consider the following 156-residue polypeptide: ATP synthase subunit b (156 aa).

Residues 3-23 (ITLTIFAQALAFAGLIWIVAT) traverse the membrane as a helical segment.

Belongs to the ATPase B chain family. As to quaternary structure, F-type ATPases have 2 components, F(1) - the catalytic core - and F(0) - the membrane proton channel. F(1) has five subunits: alpha(3), beta(3), gamma(1), delta(1), epsilon(1). F(0) has three main subunits: a(1), b(2) and c(10-14). The alpha and beta chains form an alternating ring which encloses part of the gamma chain. F(1) is attached to F(0) by a central stalk formed by the gamma and epsilon chains, while a peripheral stalk is formed by the delta and b chains.

It localises to the cell inner membrane. In terms of biological role, f(1)F(0) ATP synthase produces ATP from ADP in the presence of a proton or sodium gradient. F-type ATPases consist of two structural domains, F(1) containing the extramembraneous catalytic core and F(0) containing the membrane proton channel, linked together by a central stalk and a peripheral stalk. During catalysis, ATP synthesis in the catalytic domain of F(1) is coupled via a rotary mechanism of the central stalk subunits to proton translocation. Component of the F(0) channel, it forms part of the peripheral stalk, linking F(1) to F(0). The chain is ATP synthase subunit b from Xanthomonas oryzae pv. oryzae (strain MAFF 311018).